Consider the following 506-residue polypeptide: 2,3-bisphosphoglycerate-independent phosphoglycerate mutase (506 aa).

Mn(2+) contacts are provided by Asp-13 and Ser-63. The active-site Phosphoserine intermediate is the Ser-63. Substrate contacts are provided by residues His-124, 153–154, Arg-183, Arg-189, 254–257, and Lys-330; these read RD and RADR. Mn(2+)-binding residues include Asp-396, His-400, Asp-437, His-438, and His-456.

Belongs to the BPG-independent phosphoglycerate mutase family. As to quaternary structure, monomer. It depends on Mn(2+) as a cofactor.

The catalysed reaction is (2R)-2-phosphoglycerate = (2R)-3-phosphoglycerate. The protein operates within carbohydrate degradation; glycolysis; pyruvate from D-glyceraldehyde 3-phosphate: step 3/5. In terms of biological role, catalyzes the interconversion of 2-phosphoglycerate and 3-phosphoglycerate. This chain is 2,3-bisphosphoglycerate-independent phosphoglycerate mutase, found in Cereibacter sphaeroides (strain ATCC 17023 / DSM 158 / JCM 6121 / CCUG 31486 / LMG 2827 / NBRC 12203 / NCIMB 8253 / ATH 2.4.1.) (Rhodobacter sphaeroides).